We begin with the raw amino-acid sequence, 341 residues long: Tetraacyldisaccharide 4'-kinase (341 aa).

Thr-54–Thr-61 contacts ATP.

It belongs to the LpxK family.

It catalyses the reaction a lipid A disaccharide + ATP = a lipid IVA + ADP + H(+). Its pathway is glycolipid biosynthesis; lipid IV(A) biosynthesis; lipid IV(A) from (3R)-3-hydroxytetradecanoyl-[acyl-carrier-protein] and UDP-N-acetyl-alpha-D-glucosamine: step 6/6. Functionally, transfers the gamma-phosphate of ATP to the 4'-position of a tetraacyldisaccharide 1-phosphate intermediate (termed DS-1-P) to form tetraacyldisaccharide 1,4'-bis-phosphate (lipid IVA). This Brucella melitensis biotype 1 (strain ATCC 23456 / CCUG 17765 / NCTC 10094 / 16M) protein is Tetraacyldisaccharide 4'-kinase.